The chain runs to 254 residues: MLNINQVNINLGRKPLLKNISLDIRSGEVTALLGPNGAGKSSLLKALCQSLKTESGEISFYQQPLGQWPKAELARCLAVLPQSSSLSFGFTVEEVVALGLYPLTISQQAGKALVASQLARLDLSPLANQAYPSLSGGEKQRVHLARVLTQLAQAPRAPLLLLDEPTSALDLAQQHKVLTLARELAHSQGYGVIVVLHDLNQAARYADNIVVINNGEIVKQGSPQQVLTKDTLSQVWHYDAQFIHTQDSAMPLIV.

Residues 2–239 (LNINQVNINL…DTLSQVWHYD (238 aa)) enclose the ABC transporter domain. An ATP-binding site is contributed by 34–41 (GPNGAGKS).

It belongs to the ABC transporter superfamily. Heme (hemin) importer (TC 3.A.1.14.5) family. As to quaternary structure, the complex is composed of two ATP-binding proteins (HmuV), two transmembrane proteins (HmuU) and a solute-binding protein (HmuT).

It localises to the cell inner membrane. Its function is as follows. Part of the ABC transporter complex HmuTUV involved in hemin import. Responsible for energy coupling to the transport system. This chain is Hemin import ATP-binding protein HmuV, found in Shewanella denitrificans (strain OS217 / ATCC BAA-1090 / DSM 15013).